The following is a 500-amino-acid chain: Lysine--tRNA ligase (500 aa).

Residues Glu-410 and Glu-417 each contribute to the Mg(2+) site.

It belongs to the class-II aminoacyl-tRNA synthetase family. As to quaternary structure, homodimer. Mg(2+) is required as a cofactor.

The protein resides in the cytoplasm. It catalyses the reaction tRNA(Lys) + L-lysine + ATP = L-lysyl-tRNA(Lys) + AMP + diphosphate. This chain is Lysine--tRNA ligase, found in Pseudomonas putida (strain ATCC 47054 / DSM 6125 / CFBP 8728 / NCIMB 11950 / KT2440).